The chain runs to 413 residues: Ribulose bisphosphate carboxylase/oxygenase activase, chloroplastic (413 aa).

A chloroplast-targeting transit peptide spans 1–54; the sequence is MAATVSTIGAVNRTTLNNSNYGGLVPNSAFLGSRLKVSSRFTTSKMVTGNFKIV. Position 162-169 (162-169) interacts with ATP; it reads GGKGQGKS.

This sequence belongs to the RuBisCO activase family.

The protein resides in the plastid. It localises to the chloroplast stroma. Its function is as follows. Activation of RuBisCO (ribulose-1,5-bisphosphate carboxylase/oxygenase; EC 4.1.1.39) involves the ATP-dependent carboxylation of the epsilon-amino group of lysine leading to a carbamate structure. The polypeptide is Ribulose bisphosphate carboxylase/oxygenase activase, chloroplastic (Cucumis sativus (Cucumber)).